The chain runs to 195 residues: Putative manganese efflux pump MntP (195 aa).

The next 6 helical transmembrane spans lie at 3–23, 40–60, 68–88, 106–126, 132–152, and 165–185; these read LSATLILAFGMSMDAFAASVG, GLIFGVIEAITPLIGWGLGLL, WDHWVAFTLLAFLGGRMVLAG, VLIATAIATSLDALAIGVGLA, ILHAALLIGLATLIMSTIGML, and AEIIGGLILIGIGCNILYSHI.

It belongs to the MntP (TC 9.B.29) family.

The protein localises to the cell inner membrane. Its function is as follows. Probably functions as a manganese efflux pump. This Sodalis glossinidius (strain morsitans) protein is Putative manganese efflux pump MntP.